The sequence spans 257 residues: MASPAMHPVLSAAVPRHIAIIMDGNGRWAQRRRRPRVIGHRAGARAVNRTIDFCLEKGVSALTLFAFSSENWGRPQDEVDALMKLFLHALDREVEELQRRGVQVRFIGDRSRFAAPLRDRMAGAERSTAANSRLVLSIAASYGGRQDIASAARALAEDVAAGRLQPEQIDEALLSSRVALADLPAPDLFIRTGGDTRISNFLLWQLAYTELWFTETLWPEFDAGVLQQALDDYAGRERRFGLTSAQIADKATESSSA.

D23 is an active-site residue. D23 provides a ligand contact to Mg(2+). Residues G24 to R27, W28, R36, H40, and S68 to E70 contribute to the substrate site. N71 serves as the catalytic Proton acceptor. Substrate-binding positions include W72, R74, R191, and R197 to S199. E210 provides a ligand contact to Mg(2+).

It belongs to the UPP synthase family. Homodimer. It depends on Mg(2+) as a cofactor.

It carries out the reaction 8 isopentenyl diphosphate + (2E,6E)-farnesyl diphosphate = di-trans,octa-cis-undecaprenyl diphosphate + 8 diphosphate. Catalyzes the sequential condensation of isopentenyl diphosphate (IPP) with (2E,6E)-farnesyl diphosphate (E,E-FPP) to yield (2Z,6Z,10Z,14Z,18Z,22Z,26Z,30Z,34E,38E)-undecaprenyl diphosphate (di-trans,octa-cis-UPP). UPP is the precursor of glycosyl carrier lipid in the biosynthesis of bacterial cell wall polysaccharide components such as peptidoglycan and lipopolysaccharide. This Xanthomonas axonopodis pv. citri (strain 306) protein is Ditrans,polycis-undecaprenyl-diphosphate synthase ((2E,6E)-farnesyl-diphosphate specific).